The primary structure comprises 189 residues: Photosystem I assembly protein Ycf4 (189 aa).

2 helical membrane passes run 25-45 (SVYFWAVALTGGGLGFTLAGL) and 62-82 (LVFIPQGIAMLFYGVLGSLAG).

This sequence belongs to the Ycf4 family.

The protein localises to the cellular thylakoid membrane. Its function is as follows. Seems to be required for the assembly of the photosystem I complex. The polypeptide is Photosystem I assembly protein Ycf4 (Synechococcus sp. (strain JA-3-3Ab) (Cyanobacteria bacterium Yellowstone A-Prime)).